Here is a 121-residue protein sequence, read N- to C-terminus: Small ribosomal subunit protein bS6 (121 aa).

This sequence belongs to the bacterial ribosomal protein bS6 family.

Its function is as follows. Binds together with bS18 to 16S ribosomal RNA. The protein is Small ribosomal subunit protein bS6 of Rickettsia peacockii (strain Rustic).